The following is a 125-amino-acid chain: Interferon-induced transmembrane protein 1 (125 aa).

Over 1-36 (MHKEEHEVAVLGPPPSTILPRSTVINIHSETSVPDH) the chain is Cytoplasmic. S16 carries the phosphoserine modification. Residues 37–57 (VVWSLFNTLFLNWCCLGFIAF) constitute an intramembrane region (helical). Residues C50, C51, and C84 are each lipidated (S-palmitoyl cysteine). At 58–86 (AYSVKSRDRKMVGDVTGAQAYASTAKCLN) the chain is on the cytoplasmic side. The segment at 84 to 125 (CLNIWALILGILMTIGFILLLVFGSVTVYHIMLQIIQEKRGY) is interaction with CAV1. Residues 87 to 107 (IWALILGILMTIGFILLLVFG) form a helical membrane-spanning segment. Over 108 to 125 (SVTVYHIMLQIIQEKRGY) the chain is Extracellular.

The protein belongs to the CD225/Dispanin family. Interacts with CD81. Part of a complex composed of CD19, CR2/CD21, CD81 and IFITM1/CD225 in the membrane of mature B-cells. Interacts with CAV1; this interaction enhances the ability of CAV1 in inhibiting ERK activation. Palmitoylation on membrane-proximal cysteines controls clustering in membrane compartments and antiviral activity. In terms of tissue distribution, bone (at protein level). Levels greatly elevated in colon cancer, cervical cancer, esophageal cancer and ovarian cancer. Expressed in glioma cell lines.

It localises to the cell membrane. The protein resides in the lysosome membrane. Its function is as follows. IFN-induced antiviral protein which inhibits the entry of viruses to the host cell cytoplasm, permitting endocytosis, but preventing subsequent viral fusion and release of viral contents into the cytosol. Active against multiple viruses, including influenza A virus, SARS coronaviruses (SARS-CoV and SARS-CoV-2), Marburg virus (MARV), Ebola virus (EBOV), Dengue virus (DNV), West Nile virus (WNV), human immunodeficiency virus type 1 (HIV-1) and hepatitis C virus (HCV). Can inhibit: influenza virus hemagglutinin protein-mediated viral entry, MARV and EBOV GP1,2-mediated viral entry and SARS-CoV and SARS-CoV-2 S protein-mediated viral entry. Also implicated in cell adhesion and control of cell growth and migration. Inhibits SARS-CoV-2 S protein-mediated syncytia formation. Plays a key role in the antiproliferative action of IFN-gamma either by inhibiting the ERK activation or by arresting cell growth in G1 phase in a p53-dependent manner. Acts as a positive regulator of osteoblast differentiation. In hepatocytes, IFITM proteins act in a coordinated manner to restrict HCV infection by targeting the endocytosed HCV virion for lysosomal degradation. IFITM2 and IFITM3 display anti-HCV activity that may complement the anti-HCV activity of IFITM1 by inhibiting the late stages of HCV entry, possibly in a coordinated manner by trapping the virion in the endosomal pathway and targeting it for degradation at the lysosome. This chain is Interferon-induced transmembrane protein 1, found in Homo sapiens (Human).